Reading from the N-terminus, the 353-residue chain is Uroporphyrinogen decarboxylase (353 aa).

Substrate contacts are provided by residues 35 to 39 (RQAGR), Phe-54, Asp-84, Tyr-160, Ser-215, and His-329.

It belongs to the uroporphyrinogen decarboxylase family. In terms of assembly, homodimer.

It localises to the cytoplasm. It carries out the reaction uroporphyrinogen III + 4 H(+) = coproporphyrinogen III + 4 CO2. The protein operates within porphyrin-containing compound metabolism; protoporphyrin-IX biosynthesis; coproporphyrinogen-III from 5-aminolevulinate: step 4/4. Functionally, catalyzes the decarboxylation of four acetate groups of uroporphyrinogen-III to yield coproporphyrinogen-III. In Staphylococcus epidermidis (strain ATCC 12228 / FDA PCI 1200), this protein is Uroporphyrinogen decarboxylase.